We begin with the raw amino-acid sequence, 1281 residues long: Dynactin subunit 1 (1281 aa).

The interval 1–26 (MAQSRRHMSSRTPSGSRMSTEASARP) is disordered. A compositionally biased stretch (polar residues) spans 10–22 (SRTPSGSRMSTEA). One can recognise a CAP-Gly domain in the interval 48 to 90 (GATLFATGKWVGVILDEAKGKNDGTVQGRKYFTCDEGHGIFVR). The disordered stretch occupies residues 100–221 (GADTTSPETP…SPSKEEEGLR (122 aa)). Positions 102–114 (DTTSPETPDSSAS) are enriched in polar residues. A phosphothreonine mark is found at threonine 108, threonine 145, threonine 146, and threonine 147. Positions 129 to 152 (SKLRGLKPKKAPTARKTTTRRPKP) are enriched in basic residues. Residues 161–205 (AGPSSSLGPSGSASAGELSSSEPSTPAQTPLAAPIIPTPALTSPG) show a composition bias toward low complexity. Residue serine 179 is modified to Phosphoserine; by PLK1. At serine 212 the chain carries Phosphoserine; by CDK1. 3 coiled-coil regions span residues 214–547 (SKEE…RQQQ), 943–1049 (LKLE…EGLR), and 1185–1214 (SAQL…KETV). Residues 911-1281 (EYDAERPPSK…LHQLHSRLIS (371 aa)) form an interaction with HPS6 region.

Belongs to the dynactin 150 kDa subunit family. As to quaternary structure, monomer and homodimer. Subunit of dynactin, a multiprotein complex part of a tripartite complex with dynein and a adapter, such as BICDL1, BICD2 or HOOK3. The dynactin complex is built around ACTR1A/ACTB filament and consists of an actin-related filament composed of a shoulder domain, a pointed end and a barbed end. Its length is defined by its flexible shoulder domain. The soulder is composed of 2 DCTN1 subunits, 4 DCTN2 and 2 DCTN3. DCTN1/p150(glued) binds directly to microtubules and to cytoplasmic dynein. The 4 DCNT2 (via N-terminus) bind the ACTR1A filament and act as molecular rulers to determine the length. The pointed end is important for binding dynein-dynactin cargo adapters. Consists of 4 subunits: ACTR10, DCNT4, DCTN5 and DCTN6. The barbed end is composed of a CAPZA1:CAPZB heterodimers, which binds ACTR1A/ACTB filament and dynactin and stabilizes dynactin. Interacts with the C-terminus of MAPRE1, MAPRE2 and MAPRE3. Interacts with FBXL5. Interacts with ECPAS. Interacts with CLIP1. Interacts with CLN3 and DYNAP. Interacts with MISP; this interaction regulates its distribution at the cell cortex. Interacts with CEP131. Interacts with CEP126. Interacts with dynein intermediate chain and dynein heavy chain. Interacts with PLK1 (via POLO-box domain). Interacts with TBCB and PARD6A. Binds preferentially to tyrosinated microtubules than to detyrosinated microtubules. Interacts with KIF3A. Interacts with HPS6. Interacts with SNX6. Interacts with BICD2. Interacts with DST (isoform 1). Identified in a complex with MREG and RILP. Interacts with BCCIP. Interacts with DCDC1. Interacts with AKNA. Interacts with DYNC1I2. Interacts with RUFY3 and RUFY4. In terms of processing, ubiquitinated by a SCF complex containing FBXL5, leading to its degradation by the proteasome. Phosphorylation by SLK at Thr-145, Thr-146 and Thr-147 targets DCTN1 to the centrosome. It is uncertain if SLK phosphorylates all three threonines or one or two of them. PLK1-mediated phosphorylation at Ser-179 is essential for its localization in the nuclear envelope and promotes its dissociation from microtubules during early mitosis and positively regulates nuclear envelope breakdown during prophase.

The protein localises to the cytoplasm. Its subcellular location is the cytoskeleton. It localises to the microtubule organizing center. It is found in the centrosome. The protein resides in the centriole. The protein localises to the spindle. Its subcellular location is the nucleus envelope. It localises to the cell cortex. Functionally, part of the dynactin complex that activates the molecular motor dynein for ultra-processive transport along microtubules. Plays a key role in dynein-mediated retrograde transport of vesicles and organelles along microtubules by recruiting and tethering dynein to microtubules. Binds to both dynein and microtubules providing a link between specific cargos, microtubules and dynein. Essential for targeting dynein to microtubule plus ends, recruiting dynein to membranous cargos and enhancing dynein processivity (the ability to move along a microtubule for a long distance without falling off the track). Can also act as a brake to slow the dynein motor during motility along the microtubule. Can regulate microtubule stability by promoting microtubule formation, nucleation and polymerization and by inhibiting microtubule catastrophe in neurons. Inhibits microtubule catastrophe by binding both to microtubules and to tubulin, leading to enhanced microtubule stability along the axon. Plays a role in metaphase spindle orientation. Plays a role in centriole cohesion and subdistal appendage organization and function. Its recruitment to the centriole in a KIF3A-dependent manner is essential for the maintenance of centriole cohesion and the formation of subdistal appendage. Also required for microtubule anchoring at the mother centriole. Plays a role in primary cilia formation. This chain is Dynactin subunit 1 (Dctn1), found in Mus musculus (Mouse).